Consider the following 236-residue polypeptide: MTGDAGALVLFSGGQDSATCLAWALDRFETVETVGFDYGQRHRVELECRDDFRARIVELNPAWAARLGPDHKLDLSVLGQVSETALTRDAEIALRADGLPNTFVPGRNLLFFTLAAALASRRELRHLVGGMCETDYSGYPDCRDDTLKSLQVTLNLGIGSRSVVHTPLMWLDKAQTWGLAKILGGEKLVDLIRTGTHTCYRGDHDRLQDWGYGCGTCPACELRMKGWQEHRSSLDE.

11 to 21 (FSGGQDSATCL) is an ATP binding site. Cys199, Cys214, Cys217, and Cys220 together coordinate Zn(2+).

The protein belongs to the QueC family. Zn(2+) is required as a cofactor.

It carries out the reaction 7-carboxy-7-deazaguanine + NH4(+) + ATP = 7-cyano-7-deazaguanine + ADP + phosphate + H2O + H(+). It functions in the pathway purine metabolism; 7-cyano-7-deazaguanine biosynthesis. Catalyzes the ATP-dependent conversion of 7-carboxy-7-deazaguanine (CDG) to 7-cyano-7-deazaguanine (preQ(0)). This is 7-cyano-7-deazaguanine synthase 2 from Sphingopyxis alaskensis (strain DSM 13593 / LMG 18877 / RB2256) (Sphingomonas alaskensis).